The following is a 373-amino-acid chain: Lipoyl amidotransferase LIPT1, mitochondrial (373 aa).

A mitochondrion-targeting transit peptide spans 1–25; sequence MLIPFSMKNCFQLLCNCQVPAAGFK. A BPL/LPL catalytic domain is found at 57–243; the sequence is LEGKPILFFW…EYAAYHQIDN (187 aa). (R)-lipoyl-5'-AMP-binding residues include Tyr-107, Arg-151, Lys-161, and Thr-179.

This sequence belongs to the LplA family. Highly expressed in skeletal muscle and heart, moderately in kidney and pancreas, and detected at lower levels in liver, brain, placenta and lung.

The protein resides in the mitochondrion. It carries out the reaction N(6)-[(R)-lipoyl]-L-lysyl-[glycine-cleavage complex H protein] + L-lysyl-[lipoyl-carrier protein] = L-lysyl-[glycine-cleavage complex H protein] + N(6)-[(R)-lipoyl]-L-lysyl-[lipoyl-carrier protein]. It catalyses the reaction (R)-lipoyl-5'-AMP + L-lysyl-[lipoyl-carrier protein] = N(6)-[(R)-lipoyl]-L-lysyl-[lipoyl-carrier protein] + AMP + 2 H(+). It participates in protein modification; protein lipoylation via exogenous pathway; protein N(6)-(lipoyl)lysine from lipoate: step 2/2. Lipoyl amidotransferase that catalyzes the transfer of lipoyl moieties from lipoyl-protein H of the glycine cleavage system (lipoyl-GCSH) to E2 subunits of the pyruvate dehydrogenase complex (PDCE2). Unable to catalyze the transfer of octanoyl from octanoyl-GCSH to PDCE2. In vitro, it is also able to catalyze the transfer of the lipoyl group from lipoyl-AMP to the specific lysine residue of lipoyl domains of lipoate-dependent enzymes but this reaction may not be physiologically relevant. This Homo sapiens (Human) protein is Lipoyl amidotransferase LIPT1, mitochondrial.